Consider the following 509-residue polypeptide: L-arabinose isomerase (509 aa).

Mn(2+) contacts are provided by Glu313, Glu340, His357, and His456.

This sequence belongs to the arabinose isomerase family. Requires Mn(2+) as cofactor.

The catalysed reaction is beta-L-arabinopyranose = L-ribulose. It functions in the pathway carbohydrate degradation; L-arabinose degradation via L-ribulose; D-xylulose 5-phosphate from L-arabinose (bacterial route): step 1/3. Functionally, catalyzes the conversion of L-arabinose to L-ribulose. This chain is L-arabinose isomerase, found in Phocaeicola vulgatus (strain ATCC 8482 / DSM 1447 / JCM 5826 / CCUG 4940 / NBRC 14291 / NCTC 11154) (Bacteroides vulgatus).